A 488-amino-acid polypeptide reads, in one-letter code: DNA polymerase II small subunit (488 aa).

Belongs to the DNA polymerase delta/II small subunit family. As to quaternary structure, heterodimer of a large subunit and a small subunit.

It carries out the reaction DNA(n) + a 2'-deoxyribonucleoside 5'-triphosphate = DNA(n+1) + diphosphate. The enzyme catalyses Exonucleolytic cleavage in the 3'- to 5'-direction to yield nucleoside 5'-phosphates.. Functionally, possesses two activities: a DNA synthesis (polymerase) and an exonucleolytic activity that degrades single-stranded DNA in the 3' to 5' direction. Has a template-primer preference which is characteristic of a replicative DNA polymerase. This is DNA polymerase II small subunit (polB) from Archaeoglobus fulgidus (strain ATCC 49558 / DSM 4304 / JCM 9628 / NBRC 100126 / VC-16).